A 256-amino-acid chain; its full sequence is Nuclear shuttle protein (256 aa).

The short motif at 21 to 42 (HSTGKRSRNVSRIDFKRRSSKY) is the Bipartite nuclear localization signal element. A Nuclear localization signal motif is present at residues 81–96 (SLGKTEPSRSRSYIKL). The tract at residues 150-187 (ELFGARIHSHGNLAVSSALKDRFYIRHVFKRVISVEKD) is interaction with Arabidopsis thaliana NSI protein.

It belongs to the begomovirus nuclear shuttle protein family. In terms of assembly, binds to single-stranded and double-stranded viral DNA. Interacts with the host nuclear shuttle interacting (NSI) protein. This interaction may allow NSP to recruit NSI monomers to the viral genome and thus regulate nuclear export of viral genome by NSP.

The protein localises to the host nucleus. Its subcellular location is the host cytoplasm. It localises to the host cell membrane. In terms of biological role, binds to the genomic viral ssDNA, shuttles it into and out of the cell nucleus. Begomoviruses use 2 proteins to transport their DNA from cell to cell. The nuclear shuttle protein (NSP) shuttles it between nucleus and cytoplasm and the movement protein (MP) probably transports the DNA-NSP complex to the cell periphery and facilitates movement across the cell wall. This is Nuclear shuttle protein from Solanum lycopersicum (Tomato).